Consider the following 360-residue polypeptide: MKTSMQRKLDQLSTRLAELNDLLSRENVTADLDQYRRLTREHAELGPVVEQYALWRQSRNDETAAQELLADASMRDFAEDEIRSARERMVRLEAELQKMLLPKDPNDDRNIFLEIRAGAGGDESALFAGDLLRMYLRFAERQRWQVEMMSESASDLGGYKEVIVRIAGQGAYSRLKFESGGHRVQRVPATETQGRIHTSACTVAVMPEADEIGEVEINPADLRIDTFRASGAGGQHINKTDSAVRVTHIPTGIVVECQDDRSQHKNKDRALKVLAARIKDKQYHEQHAKEAATRKSLIGSGDRSERIRTYNFPQGRMTDHRINLTLYRLEALMDGDLDELIGALVTEHQAELLASLGDTD.

Q235 is modified (N5-methylglutamine).

It belongs to the prokaryotic/mitochondrial release factor family. Post-translationally, methylated by PrmC. Methylation increases the termination efficiency of RF1.

It is found in the cytoplasm. Its function is as follows. Peptide chain release factor 1 directs the termination of translation in response to the peptide chain termination codons UAG and UAA. The protein is Peptide chain release factor 1 of Burkholderia ambifaria (strain MC40-6).